The primary structure comprises 295 residues: Pyridoxal 5'-phosphate synthase subunit PdxS (295 aa).

Position 25 (Asp25) interacts with D-ribose 5-phosphate. The active-site Schiff-base intermediate with D-ribose 5-phosphate is Lys82. Position 154 (Gly154) interacts with D-ribose 5-phosphate. Arg166 is a binding site for D-glyceraldehyde 3-phosphate. D-ribose 5-phosphate-binding positions include Gly215 and Gly236 to Ser237.

This sequence belongs to the PdxS/SNZ family. As to quaternary structure, in the presence of PdxT, forms a dodecamer of heterodimers.

The enzyme catalyses aldehydo-D-ribose 5-phosphate + D-glyceraldehyde 3-phosphate + L-glutamine = pyridoxal 5'-phosphate + L-glutamate + phosphate + 3 H2O + H(+). It functions in the pathway cofactor biosynthesis; pyridoxal 5'-phosphate biosynthesis. Its function is as follows. Catalyzes the formation of pyridoxal 5'-phosphate from ribose 5-phosphate (RBP), glyceraldehyde 3-phosphate (G3P) and ammonia. The ammonia is provided by the PdxT subunit. Can also use ribulose 5-phosphate and dihydroxyacetone phosphate as substrates, resulting from enzyme-catalyzed isomerization of RBP and G3P, respectively. The chain is Pyridoxal 5'-phosphate synthase subunit PdxS from Staphylococcus epidermidis (strain ATCC 35984 / DSM 28319 / BCRC 17069 / CCUG 31568 / BM 3577 / RP62A).